The chain runs to 257 residues: Probable dihydroorotate dehydrogenase B (NAD(+)), electron transfer subunit (257 aa).

Residues 2-89 form the FAD-binding FR-type domain; sequence EKPVICRIKE…RGPYGTYFEP (88 aa). Residues Cys-208, Cys-213, Cys-216, and Cys-226 each contribute to the [2Fe-2S] cluster site.

The protein belongs to the PyrK family. As to quaternary structure, heterotetramer of 2 PyrK and 2 PyrD type B subunits. It depends on [2Fe-2S] cluster as a cofactor. FAD is required as a cofactor.

It functions in the pathway pyrimidine metabolism; UMP biosynthesis via de novo pathway; orotate from (S)-dihydroorotate (NAD(+) route): step 1/1. Functionally, responsible for channeling the electrons from the oxidation of dihydroorotate from the FMN redox center in the PyrD type B subunit to the ultimate electron acceptor NAD(+). The sequence is that of Probable dihydroorotate dehydrogenase B (NAD(+)), electron transfer subunit from Methanocaldococcus jannaschii (strain ATCC 43067 / DSM 2661 / JAL-1 / JCM 10045 / NBRC 100440) (Methanococcus jannaschii).